The primary structure comprises 228 residues: Ribonuclease 3 (228 aa).

One can recognise an RNase III domain in the interval 5-127 (LMALQARLQH…VIGAVYLDAG (123 aa)). Glu40 contributes to the Mg(2+) binding site. The active site involves Asp44. Asp113 and Glu116 together coordinate Mg(2+). Residue Glu116 is part of the active site. In terms of domain architecture, DRBM spans 154 to 224 (DPKTELQEWL…AAAMLQTLKA (71 aa)).

Belongs to the ribonuclease III family. In terms of assembly, homodimer. It depends on Mg(2+) as a cofactor.

It is found in the cytoplasm. It carries out the reaction Endonucleolytic cleavage to 5'-phosphomonoester.. Digests double-stranded RNA. Involved in the processing of primary rRNA transcript to yield the immediate precursors to the large and small rRNAs (23S and 16S). Processes some mRNAs, and tRNAs when they are encoded in the rRNA operon. Processes pre-crRNA and tracrRNA of type II CRISPR loci if present in the organism. This Albidiferax ferrireducens (strain ATCC BAA-621 / DSM 15236 / T118) (Rhodoferax ferrireducens) protein is Ribonuclease 3.